We begin with the raw amino-acid sequence, 220 residues long: UPF0319 protein Asuc_1002 (220 aa).

Residues 1-21 form the signal peptide; sequence MKFRLAAVAAAALLASSASFA.

It belongs to the UPF0319 family.

The sequence is that of UPF0319 protein Asuc_1002 from Actinobacillus succinogenes (strain ATCC 55618 / DSM 22257 / CCUG 43843 / 130Z).